A 401-amino-acid chain; its full sequence is Imidazolonepropionase (401 aa).

Residues His-66 and His-68 each contribute to the Fe(3+) site. Residues His-66 and His-68 each contribute to the Zn(2+) site. 4-imidazolone-5-propanoate-binding residues include Arg-75, Tyr-138, and His-171. Tyr-138 lines the N-formimidoyl-L-glutamate pocket. A Fe(3+)-binding site is contributed by His-236. His-236 is a binding site for Zn(2+). Residue Gln-239 participates in 4-imidazolone-5-propanoate binding. Asp-311 serves as a coordination point for Fe(3+). Residue Asp-311 participates in Zn(2+) binding. Residues Asn-313 and Gly-315 each contribute to the N-formimidoyl-L-glutamate site. Residue Thr-316 coordinates 4-imidazolone-5-propanoate.

The protein belongs to the metallo-dependent hydrolases superfamily. HutI family. Zn(2+) is required as a cofactor. The cofactor is Fe(3+).

The protein resides in the cytoplasm. The catalysed reaction is 4-imidazolone-5-propanoate + H2O = N-formimidoyl-L-glutamate. The protein operates within amino-acid degradation; L-histidine degradation into L-glutamate; N-formimidoyl-L-glutamate from L-histidine: step 3/3. Functionally, catalyzes the hydrolytic cleavage of the carbon-nitrogen bond in imidazolone-5-propanoate to yield N-formimidoyl-L-glutamate. It is the third step in the universal histidine degradation pathway. The sequence is that of Imidazolonepropionase from Pseudomonas putida (strain ATCC 47054 / DSM 6125 / CFBP 8728 / NCIMB 11950 / KT2440).